A 268-amino-acid polypeptide reads, in one-letter code: Bidirectional sugar transporter N3 (268 aa).

Residues 1–7 (MAISHNT) are Extracellular-facing. The helical transmembrane segment at 8 to 28 (LAFTFGMLGNVISFLVFLAPI) threads the bilayer. Residues 10–96 (FTFGMLGNVI…ILYIIYAPRD (87 aa)) form the MtN3/slv 1 domain. Residues 29 to 42 (STFYRIYKKKSTEG) are Cytoplasmic-facing. A helical transmembrane segment spans residues 43–63 (FQSLPYLVALFSSMLWLYYAL). Residues 64–70 (LKKDAFL) lie on the Extracellular side of the membrane. The chain crosses the membrane as a helical span at residues 71-91 (LITINSFGCVVETIYIILYII). At 92 to 103 (YAPRDARNLTFK) the chain is on the cytoplasmic side. A helical transmembrane segment spans residues 104–124 (LLSAMNVGSFALILIVTNYAV). Residues 125–131 (HGPLRVQ) lie on the Extracellular side of the membrane. Residues 131-214 (QVLGWVCVSL…QMLLYAIYRN (84 aa)) form the MtN3/slv 2 domain. A helical membrane pass occupies residues 132–152 (VLGWVCVSLSVSVFAAPLSIV). Over 153 to 165 (AQVVRTKSVEFMP) the chain is Cytoplasmic. A helical transmembrane segment spans residues 166 to 186 (FNLSFTLTLSATMWFGYGFFL). Topologically, residues 187–190 (KDIC) are extracellular. A helical transmembrane segment spans residues 191-211 (IXLPNVLGXVLGLLQMLLYAI). The Cytoplasmic portion of the chain corresponds to 212 to 268 (YRNGGEKAMKKEKKAPIEPPKSIVIETQLEKIEQEKKNKDDDNEEKDKSEEPIGCGV). A coiled-coil region spans residues 234-262 (IVIETQLEKIEQEKKNKDDDNEEKDKSEE). Over residues 243 to 262 (IEQEKKNKDDDNEEKDKSEE) the composition is skewed to basic and acidic residues. A disordered region spans residues 243–268 (IEQEKKNKDDDNEEKDKSEEPIGCGV).

This sequence belongs to the SWEET sugar transporter family. In terms of assembly, forms homooligomers and/or heterooligomers.

Its subcellular location is the cell membrane. Functionally, mediates both low-affinity uptake and efflux of sugar across the plasma membrane. This is Bidirectional sugar transporter N3 (N3) from Medicago truncatula (Barrel medic).